The chain runs to 105 residues: Protein FAM24A (105 aa).

Positions 1–32 are cleaved as a signal peptide; sequence MAKMFDLRTKIMIGIGSSLLVAAMVLLSVVFC.

Belongs to the FAM24 family.

Its subcellular location is the secreted. The polypeptide is Protein FAM24A (FAM24A) (Homo sapiens (Human)).